We begin with the raw amino-acid sequence, 466 residues long: Ribulose bisphosphate carboxylase large chain (466 aa).

Position 4 is an N6,N6,N6-trimethyllysine (Lys-4). Positions 113 and 163 each coordinate substrate. Residue Lys-165 is the Proton acceptor of the active site. Substrate is bound at residue Lys-167. Mg(2+) contacts are provided by Lys-191, Asp-193, and Glu-194. Lys-191 carries the N6-carboxylysine modification. His-284 (proton acceptor) is an active-site residue. Substrate contacts are provided by Arg-285, His-317, and Ser-369.

Belongs to the RuBisCO large chain family. Type I subfamily. Heterohexadecamer of 8 large chains and 8 small chains; disulfide-linked. The disulfide link is formed within the large subunit homodimers. The cofactor is Mg(2+). In terms of processing, the disulfide bond which can form in the large chain dimeric partners within the hexadecamer appears to be associated with oxidative stress and protein turnover.

It is found in the plastid. The protein resides in the chloroplast. It carries out the reaction 2 (2R)-3-phosphoglycerate + 2 H(+) = D-ribulose 1,5-bisphosphate + CO2 + H2O. It catalyses the reaction D-ribulose 1,5-bisphosphate + O2 = 2-phosphoglycolate + (2R)-3-phosphoglycerate + 2 H(+). RuBisCO catalyzes two reactions: the carboxylation of D-ribulose 1,5-bisphosphate, the primary event in carbon dioxide fixation, as well as the oxidative fragmentation of the pentose substrate in the photorespiration process. Both reactions occur simultaneously and in competition at the same active site. The chain is Ribulose bisphosphate carboxylase large chain from Ruttya fruticosa (African azalea).